Reading from the N-terminus, the 412-residue chain is MADTRPERRFTRIDRLPPYVFNITAELKMAARRRGEDIIDFSMGNPDGATPPHIVEKLCTVAQRPDTHGYSTSRGIPRLRRAISRWYQDRYDVEIDPESEAIVTIGSKEGLAHLMLATLDHGDTVLVPNPSYPIHIYGAVIAGAQVRSVPLVEGVDFFNELERAIRESYPKPKMMILGFPSNPTAQCVELEFFEKVVALAKRYDVLVVHDLAYADIVYDGWKAPSIMQVPGARDVAVEFFTLSKSYNMAGWRIGFMVGNKTLVSALARIKSYHDYGTFTPLQVAAIAALEGDQQCVRDIAEQYKRRRDVLVKGLHEAGWMVEMPKASMYVWAKIPEPYAAMGSLEFAKKLLNEAKVCVSPGIGFGDYGDTHVRFALIENRDRIRQAIRGIKAMFRADGLLPASSKHIHENAE.

Lys244 is modified (N6-(pyridoxal phosphate)lysine).

Belongs to the class-I pyridoxal-phosphate-dependent aminotransferase family. As to quaternary structure, homodimer. It depends on pyridoxal 5'-phosphate as a cofactor.

The protein resides in the cytoplasm. It catalyses the reaction L-alanine + 2-oxoglutarate = pyruvate + L-glutamate. It functions in the pathway amino-acid biosynthesis; L-alanine biosynthesis. Functionally, involved in the biosynthesis of alanine. Catalyzes the transamination of pyruvate by glutamate, leading to the formation of L-alanine and 2-oxoglutarate. Is also able to catalyze the reverse reaction. In Escherichia coli (strain K12), this protein is Glutamate-pyruvate aminotransferase AlaC.